The chain runs to 137 residues: Leaf-specific thionin (137 aa).

The first 28 residues, methionine 1–alanine 28, serve as a signal peptide directing secretion. 4 disulfides stabilise this stretch: cysteine 31–cysteine 68, cysteine 32–cysteine 60, cysteine 40–cysteine 58, and cysteine 44–cysteine 54. A propeptide spans leucine 75–alanine 137 (acidic domain).

The protein belongs to the plant thionin (TC 1.C.44) family. 4 C-C subfamily.

It is found in the secreted. In terms of biological role, thionins are small plant proteins which are toxic to animal cells. They seem to exert their toxic effect at the level of the cell membrane. Their precise function is not known. The polypeptide is Leaf-specific thionin (THI1.5) (Hordeum vulgare (Barley)).